The following is a 467-amino-acid chain: UDP-N-acetylmuramate--L-alanine ligase (467 aa).

Residue 112–118 participates in ATP binding; that stretch reads GTHGKTT.

This sequence belongs to the MurCDEF family.

Its subcellular location is the cytoplasm. The catalysed reaction is UDP-N-acetyl-alpha-D-muramate + L-alanine + ATP = UDP-N-acetyl-alpha-D-muramoyl-L-alanine + ADP + phosphate + H(+). The protein operates within cell wall biogenesis; peptidoglycan biosynthesis. In terms of biological role, cell wall formation. The protein is UDP-N-acetylmuramate--L-alanine ligase of Paraburkholderia xenovorans (strain LB400).